A 171-amino-acid chain; its full sequence is Large ribosomal subunit protein bL9 (171 aa).

It belongs to the bacterial ribosomal protein bL9 family.

Binds to the 23S rRNA. The chain is Large ribosomal subunit protein bL9 from Rickettsia africae (strain ESF-5).